Consider the following 681-residue polypeptide: RNA polymerase sigma factor RpoD (681 aa).

Disordered stretches follow at residues 1 to 60 (MKKK…ETAK) and 239 to 270 (DDDE…VSEK). The segment covering 261–270 (EERKKVVSEK) has biased composition (basic and acidic residues). The tract at residues 446-516 (MAKSNLRLVV…SRAIADQART (71 aa)) is sigma-70 factor domain-2. The Interaction with polymerase core subunit RpoC signature appears at 470-473 (DLIQ). The interval 525 to 601 (DTINRINKVM…DKNIVSSIDH (77 aa)) is sigma-70 factor domain-3. Residues 614-668 (VLDQLNEREKAVIRMRFGLLDDESDRTLEEIGKELNVTRERVRQIESSAIKKLRS) are sigma-70 factor domain-4. The H-T-H motif DNA-binding region spans 641-660 (LEEIGKELNVTRERVRQIES).

The protein belongs to the sigma-70 factor family. RpoD/SigA subfamily. As to quaternary structure, interacts transiently with the RNA polymerase catalytic core.

Its subcellular location is the cytoplasm. In terms of biological role, sigma factors are initiation factors that promote the attachment of RNA polymerase to specific initiation sites and are then released. This sigma factor is the primary sigma factor during exponential growth. This chain is RNA polymerase sigma factor RpoD, found in Helicobacter pylori (strain J99 / ATCC 700824) (Campylobacter pylori J99).